The sequence spans 1239 residues: DNA-directed RNA polymerase subunit beta (1239 aa).

The disordered stretch occupies residues 1182–1239 (IEGAENQLEDKEEKEEEKEENYKEDSDEYDDLREEDVEPDLEELSLDDLDLDDFGDEH). Acidic residues-rich tracts occupy residues 1191–1200 (DKEEKEEEKE) and 1206–1239 (DSDE…GDEH).

It belongs to the RNA polymerase beta chain family. As to quaternary structure, the RNAP catalytic core consists of 2 alpha, 1 beta, 1 beta' and 1 omega subunit. When a sigma factor is associated with the core the holoenzyme is formed, which can initiate transcription.

The catalysed reaction is RNA(n) + a ribonucleoside 5'-triphosphate = RNA(n+1) + diphosphate. In terms of biological role, DNA-dependent RNA polymerase catalyzes the transcription of DNA into RNA using the four ribonucleoside triphosphates as substrates. This Clostridium botulinum (strain Loch Maree / Type A3) protein is DNA-directed RNA polymerase subunit beta.